We begin with the raw amino-acid sequence, 371 residues long: Chaperone protein DnaJ (371 aa).

The J domain maps to 5-69; the sequence is DYYEVLGLSK…QKRAQYDQFG (65 aa). The CR-type zinc-finger motif lies at 133-215; that stretch reads GKELNVEIPV…CHGSGKVRKR (83 aa). Residues cysteine 146, cysteine 149, cysteine 163, cysteine 166, cysteine 189, cysteine 192, cysteine 203, and cysteine 206 each contribute to the Zn(2+) site. 4 CXXCXGXG motif repeats span residues 146 to 153, 163 to 170, 189 to 196, and 203 to 210; these read CDTCKGSG, CKHCSGSG, CSHCSGTG, and CTTCHGSG.

Belongs to the DnaJ family. As to quaternary structure, homodimer. The cofactor is Zn(2+).

It is found in the cytoplasm. Its function is as follows. Participates actively in the response to hyperosmotic and heat shock by preventing the aggregation of stress-denatured proteins and by disaggregating proteins, also in an autonomous, DnaK-independent fashion. Unfolded proteins bind initially to DnaJ; upon interaction with the DnaJ-bound protein, DnaK hydrolyzes its bound ATP, resulting in the formation of a stable complex. GrpE releases ADP from DnaK; ATP binding to DnaK triggers the release of the substrate protein, thus completing the reaction cycle. Several rounds of ATP-dependent interactions between DnaJ, DnaK and GrpE are required for fully efficient folding. Also involved, together with DnaK and GrpE, in the DNA replication of plasmids through activation of initiation proteins. This Bacillus cereus (strain 03BB102) protein is Chaperone protein DnaJ.